Consider the following 251-residue polypeptide: Imidazole glycerol phosphate synthase subunit HisF (251 aa).

Active-site residues include D11 and D130.

Belongs to the HisA/HisF family. In terms of assembly, heterodimer of HisH and HisF.

The protein resides in the cytoplasm. The enzyme catalyses 5-[(5-phospho-1-deoxy-D-ribulos-1-ylimino)methylamino]-1-(5-phospho-beta-D-ribosyl)imidazole-4-carboxamide + L-glutamine = D-erythro-1-(imidazol-4-yl)glycerol 3-phosphate + 5-amino-1-(5-phospho-beta-D-ribosyl)imidazole-4-carboxamide + L-glutamate + H(+). Its pathway is amino-acid biosynthesis; L-histidine biosynthesis; L-histidine from 5-phospho-alpha-D-ribose 1-diphosphate: step 5/9. Functionally, IGPS catalyzes the conversion of PRFAR and glutamine to IGP, AICAR and glutamate. The HisF subunit catalyzes the cyclization activity that produces IGP and AICAR from PRFAR using the ammonia provided by the HisH subunit. The sequence is that of Imidazole glycerol phosphate synthase subunit HisF from Thiobacillus denitrificans (strain ATCC 25259 / T1).